Reading from the N-terminus, the 80-residue chain is Probable antimicrobial peptide clone Con10 (80 aa).

A signal peptide spans 1-24 (MQYKTKTFLVIFLAYLVVTNEAEA). Residues 56–80 (EIEDFFDPYQRELDLELERLLSQLQ) constitute a propeptide that is removed on maturation.

It belongs to the non-disulfide-bridged peptide (NDBP) superfamily. Medium-length antimicrobial peptide (group 3) family. Expressed by the venom gland.

The protein localises to the secreted. It localises to the target cell membrane. Its function is as follows. Antimicrobial peptide. Has antifungal activity against all strains tested (MIC=12.5-200 uM). May act by disrupting the integrity of the bacterial cell membrane. The protein is Probable antimicrobial peptide clone Con10 of Opisthacanthus cayaporum (South American scorpion).